The sequence spans 147 residues: MTTTIYILNGPNLNLLGQRQPEIYGHETLADVERRCAAVAAEKGFSVRLFQSNHEGAIVDQIHEARQAACGIVINPAAYTHTSVAILDALNAFEGPVIECHISNVHKRESFRHHSYVSLRADGVLAGFGIEGYELAVRRICSLCAGG.

The active-site Proton acceptor is the tyrosine 24. 3 residues coordinate substrate: asparagine 75, histidine 81, and aspartate 88. The active-site Proton donor is the histidine 101. Substrate-binding positions include 102-103 and arginine 112; that span reads IS.

Belongs to the type-II 3-dehydroquinase family. In terms of assembly, homododecamer.

It catalyses the reaction 3-dehydroquinate = 3-dehydroshikimate + H2O. It functions in the pathway metabolic intermediate biosynthesis; chorismate biosynthesis; chorismate from D-erythrose 4-phosphate and phosphoenolpyruvate: step 3/7. Functionally, catalyzes a trans-dehydration via an enolate intermediate. The protein is 3-dehydroquinate dehydratase of Cereibacter sphaeroides (strain ATCC 17023 / DSM 158 / JCM 6121 / CCUG 31486 / LMG 2827 / NBRC 12203 / NCIMB 8253 / ATH 2.4.1.) (Rhodobacter sphaeroides).